The chain runs to 702 residues: Elongation factor G (702 aa).

Positions 8–286 (DKVRNIGIIA…AVVEYLPSPL (279 aa)) constitute a tr-type G domain. GTP contacts are provided by residues 17–24 (AHIDAGKT), 85–89 (DTPGH), and 139–142 (NKMD).

The protein belongs to the TRAFAC class translation factor GTPase superfamily. Classic translation factor GTPase family. EF-G/EF-2 subfamily.

The protein resides in the cytoplasm. Functionally, catalyzes the GTP-dependent ribosomal translocation step during translation elongation. During this step, the ribosome changes from the pre-translocational (PRE) to the post-translocational (POST) state as the newly formed A-site-bound peptidyl-tRNA and P-site-bound deacylated tRNA move to the P and E sites, respectively. Catalyzes the coordinated movement of the two tRNA molecules, the mRNA and conformational changes in the ribosome. This chain is Elongation factor G, found in Chloroflexus aggregans (strain MD-66 / DSM 9485).